A 250-amino-acid chain; its full sequence is 5-oxoprolinase subunit A (250 aa).

Belongs to the LamB/PxpA family. Forms a complex composed of PxpA, PxpB and PxpC.

It carries out the reaction 5-oxo-L-proline + ATP + 2 H2O = L-glutamate + ADP + phosphate + H(+). Functionally, catalyzes the cleavage of 5-oxoproline to form L-glutamate coupled to the hydrolysis of ATP to ADP and inorganic phosphate. This Pseudomonas fluorescens (strain ATCC BAA-477 / NRRL B-23932 / Pf-5) protein is 5-oxoprolinase subunit A.